The chain runs to 216 residues: MPTPHEAEKQHTGPEEADRPPSMSSHDAAPSGPPSRNPCCLCWCCCCSCSWNQERQRAWQVSRESKLQPLPSCEVCTPPSPKEVQSWAQSFDKLMHSPTGRSVFRAFLRTEYSEENMLFWLACEELKAEANQHVVDEKARLIYEDYVSILSPKEVSLDSRVREGINRKMQEPSPHTFDDAQLQIYTLMHRDSYPRFLTSPTYRSLLLQGAPQSSEA.

Basic and acidic residues predominate over residues 1–19 (MPTPHEAEKQHTGPEEADR). The segment at 1–30 (MPTPHEAEKQHTGPEEADRPPSMSSHDAAP) is disordered. Ser-24 and Ser-97 each carry phosphoserine. The RGS domain occupies 90–206 (SFDKLMHSPT…LTSPTYRSLL (117 aa)). The residue at position 151 (Ser-151) is a Phosphoserine; by MAPK1 and MAPK3. The tract at residues 207–216 (LQGAPQSSEA) is interaction with GIPC.

In terms of assembly, interacts with GIPC PDZ domain. Interacts with GNAO1. In terms of processing, fatty acylated. Heavily palmitoylated in the cysteine string motif. Phosphorylated, mainly on serine residues.

The protein localises to the membrane. Functionally, inhibits signal transduction by increasing the GTPase activity of G protein alpha subunits thereby driving them into their inactive GDP-bound form. Binds to G-alpha subfamily 1 members, with the order G(i)a3 &gt; G(i)a1 &gt; G(o)a &gt;&gt; G(z)a/G(i)a2. Activity on G(z)-alpha is inhibited by phosphorylation and palmitoylation of the G-protein. The protein is Regulator of G-protein signaling 19 (Rgs19) of Mus musculus (Mouse).